The chain runs to 1374 residues: DNA-directed RNA polymerase subunit beta (1374 aa).

Belongs to the RNA polymerase beta chain family. The RNAP catalytic core consists of 2 alpha, 1 beta, 1 beta' and 1 omega subunit. When a sigma factor is associated with the core the holoenzyme is formed, which can initiate transcription.

The catalysed reaction is RNA(n) + a ribonucleoside 5'-triphosphate = RNA(n+1) + diphosphate. In terms of biological role, DNA-dependent RNA polymerase catalyzes the transcription of DNA into RNA using the four ribonucleoside triphosphates as substrates. The polypeptide is DNA-directed RNA polymerase subunit beta (Rickettsia prowazekii (strain Madrid E)).